A 109-amino-acid polypeptide reads, in one-letter code: Ribulose bisphosphate carboxylase small subunit (109 aa).

It belongs to the RuBisCO small chain family. In terms of assembly, heterohexadecamer of 8 large and 8 small subunits.

The protein resides in the carboxysome. Its function is as follows. RuBisCO catalyzes two reactions: the carboxylation of D-ribulose 1,5-bisphosphate, the primary event in carbon dioxide fixation, as well as the oxidative fragmentation of the pentose substrate in the photorespiration process. Both reactions occur simultaneously and in competition at the same active site. Although the small subunit is not catalytic it is essential for maximal activity. This Prochlorothrix hollandica protein is Ribulose bisphosphate carboxylase small subunit.